A 28-amino-acid polypeptide reads, in one-letter code: Odorant-binding protein 1 (28 aa).

The protein belongs to the calycin superfamily. Lipocalin family. In terms of tissue distribution, nasal mucosa.

The protein resides in the secreted. It is found in the extracellular space. Its function is as follows. This soluble protein may play a specific role in odor discrimination and perception. The sequence is that of Odorant-binding protein 1 from Hystrix cristata (North African crested porcupine).